The sequence spans 66 residues: Phylloseptin-H7 (66 aa).

The signal sequence occupies residues 1–22 (MAFLKKSLFLVLFLGLVSLSIC). A propeptide spanning residues 23 to 44 (EEEKRETEEEENDQEEDDKSEE) is cleaved from the precursor. The interval 25–44 (EKRETEEEENDQEEDDKSEE) is disordered. The segment covering 30–41 (EEEENDQEEDDK) has biased composition (acidic residues). A Leucine amide modification is found at Leu65.

In terms of tissue distribution, expressed by the skin glands.

It localises to the secreted. Its function is as follows. Has antimicrobial activity. In Pithecopus hypochondrialis (Orange-legged leaf frog), this protein is Phylloseptin-H7.